The following is a 275-amino-acid chain: 4-hydroxy-tetrahydrodipicolinate reductase (275 aa).

Residues 13 to 18 (GAAGKM), 108 to 110 (GTT), and 134 to 137 (APNF) contribute to the NAD(+) site. H164 serves as the catalytic Proton donor/acceptor. H165 contacts (S)-2,3,4,5-tetrahydrodipicolinate. The Proton donor role is filled by K168. 174–175 (GT) provides a ligand contact to (S)-2,3,4,5-tetrahydrodipicolinate.

The protein belongs to the DapB family.

It is found in the cytoplasm. It catalyses the reaction (S)-2,3,4,5-tetrahydrodipicolinate + NAD(+) + H2O = (2S,4S)-4-hydroxy-2,3,4,5-tetrahydrodipicolinate + NADH + H(+). The enzyme catalyses (S)-2,3,4,5-tetrahydrodipicolinate + NADP(+) + H2O = (2S,4S)-4-hydroxy-2,3,4,5-tetrahydrodipicolinate + NADPH + H(+). Its pathway is amino-acid biosynthesis; L-lysine biosynthesis via DAP pathway; (S)-tetrahydrodipicolinate from L-aspartate: step 4/4. Its function is as follows. Catalyzes the conversion of 4-hydroxy-tetrahydrodipicolinate (HTPA) to tetrahydrodipicolinate. The chain is 4-hydroxy-tetrahydrodipicolinate reductase from Synechocystis sp. (strain ATCC 27184 / PCC 6803 / Kazusa).